The primary structure comprises 154 residues: CASP-like protein ARALYDRAFT_485429 (154 aa).

Over 1 to 12 (MENVPGSFGTSA) the chain is Cytoplasmic. A helical transmembrane segment spans residues 13–33 (SFALRFGQTIFSAASLIFMCF). Residues 34 to 41 (DYDFYDFT) lie on the Extracellular side of the membrane. A helical transmembrane segment spans residues 42 to 62 (TFCYLATVMAIVTPWSILLAL). At 63–81 (TDTYSVLVKLLPQELRVLS) the chain is on the cytoplasmic side. Residues 82 to 102 (IVFAGDFVLSFLSLGGACAVA) form a helical membrane-spanning segment. Residues 103–128 (SATELLASADGKICDGNLCIQYQVSA) lie on the Extracellular side of the membrane. Residues 129–149 (ALAFLCWFLLLASALFNFWSL) traverse the membrane as a helical segment. The Cytoplasmic portion of the chain corresponds to 150–154 (PSLYY).

Belongs to the Casparian strip membrane proteins (CASP) family. Homodimer and heterodimers.

It localises to the cell membrane. This Arabidopsis lyrata subsp. lyrata (Lyre-leaved rock-cress) protein is CASP-like protein ARALYDRAFT_485429.